The primary structure comprises 671 residues: Transcriptional regulator Kaiso (671 aa).

The interval 1 to 103 (MESRKLISAT…RADLLDELIK (103 aa)) is interaction with NCOR1. Residues 1–136 (MESRKLISAT…SGTEQDGTAE (136 aa)) form a self-association region. One can recognise a BTB domain in the interval 32-94 (CDVTVIVEDR…IYSSKVVRVR (63 aa)). Residues 127 to 144 (SGTEQDGTAETLPSSSSD) are compositionally biased toward polar residues. Residues 127 to 161 (SGTEQDGTAETLPSSSSDKSLDMEKSKDEAQDNGA) form a disordered region. Positions 145-156 (KSLDMEKSKDEA) are enriched in basic and acidic residues. Glycyl lysine isopeptide (Lys-Gly) (interchain with G-Cter in SUMO2) cross-links involve residues Lys-151 and Lys-153. Thr-251 carries the post-translational modification Phosphothreonine. The interaction with CBFA2T3 stretch occupies residues 298-571 (LPNHMSSSVN…FMSSHIKSVH (274 aa)). Residues 332 to 365 (IIDDDDDIISSSPDSAVSNTSLVPQADNSKSTTL) are disordered. Positions 347–365 (AVSNTSLVPQADNSKSTTL) are enriched in polar residues. Residues Lys-388, Lys-405, Lys-412, and Lys-447 each participate in a glycyl lysine isopeptide (Lys-Gly) (interchain with G-Cter in SUMO2) cross-link. The segment covering 451–461 (DGGEAKLDNEL) has biased composition (basic and acidic residues). The segment at 451 to 474 (DGGEAKLDNELPKTSGSEPPNKRM) is disordered. Residues 452 to 671 (GGEAKLDNEL…EFEFIIPESY (220 aa)) are interaction with CTNND1. Glycyl lysine isopeptide (Lys-Gly) (interchain with G-Cter in SUMO2) cross-links involve residues Lys-463, Lys-472, and Lys-477. Positions 469–478 (PPNKRMKVKH) match the Nuclear localization signal motif. C2H2-type zinc fingers lie at residues 492–514 (YICIVCKRSYVCLTSLRRHFNIH), 520–542 (YQCRYCDKVFPLAEYRTKHEIHH), and 548–571 (YQCLTCGKSFINYQFMSSHIKSVH). The segment at 512–637 (NIHSWEKKYQ…TSTPPQNKST (126 aa)) is required for DNA-binding. Residues Lys-537, Lys-568, Lys-580, Lys-609, and Lys-616 each participate in a glycyl lysine isopeptide (Lys-Gly) (interchain with G-Cter in SUMO2) cross-link.

As to quaternary structure, interacts with NCOR1. Self-associates. Interacts with CTNND1, and this interaction inhibits binding to both methylated and non-methylated DNA. Interacts with CTNND2. Interacts with KPNA2/RCH1, which may mediate nuclear import of this protein. Interacts with CBFA2T3. In terms of tissue distribution, expressed in brain, heart, kidney, liver, lung, neuromuscular junctions, skeletal muscle, spleen and testis.

It localises to the nucleus. Transcriptional regulator with bimodal DNA-binding specificity. Binds to methylated CpG dinucleotides in the consensus sequence 5'-CGCG-3' and also binds to the non-methylated consensus sequence 5'-CTGCNA-3' also known as the consensus kaiso binding site (KBS). May recruit the N-CoR repressor complex to promote histone deacetylation and the formation of repressive chromatin structures in target gene promoters. Contributes to the repression of target genes of the Wnt signaling pathway. May also activate transcription of a subset of target genes by the recruitment of CTNND2. Represses expression of MMP7 in conjunction with transcriptional corepressors CBFA2T3, CBFA2T2 and RUNX1T1. In Mus musculus (Mouse), this protein is Transcriptional regulator Kaiso (Zbtb33).